We begin with the raw amino-acid sequence, 413 residues long: Argininosuccinate synthase (413 aa).

ATP contacts are provided by residues 12-20 (AYSGGLDTS) and Ala39. Residues Tyr92 and Ser97 each coordinate L-citrulline. Gly122 is an ATP binding site. Thr124, Asn128, and Asp129 together coordinate L-aspartate. L-citrulline is bound at residue Asn128. L-citrulline is bound by residues Arg132, Ser189, Ser198, Glu274, and Tyr286.

The protein belongs to the argininosuccinate synthase family. Type 1 subfamily. In terms of assembly, homotetramer.

Its subcellular location is the cytoplasm. The enzyme catalyses L-citrulline + L-aspartate + ATP = 2-(N(omega)-L-arginino)succinate + AMP + diphosphate + H(+). Its pathway is amino-acid biosynthesis; L-arginine biosynthesis; L-arginine from L-ornithine and carbamoyl phosphate: step 2/3. This is Argininosuccinate synthase from Aliarcobacter butzleri (strain RM4018) (Arcobacter butzleri).